The sequence spans 91 residues: UPF0213 protein NMA2126 (91 aa).

The GIY-YIG domain occupies Ser-4–Gln-83.

It belongs to the UPF0213 family.

The chain is UPF0213 protein NMA2126 from Neisseria meningitidis serogroup A / serotype 4A (strain DSM 15465 / Z2491).